An 809-amino-acid polypeptide reads, in one-letter code: MDHKEVVLLLLLFLKSGLGDSLDDYVNTQGAFLFSLSRKQVAARSVEECAAKCEAETNFICRAFQYHSKDQQCVVMAENSKTSPIARMRDVVLFEKRIYLSECKTGNGKNYRGTTSKTKSGVICQKWSVSSPHIPKYSPEKFPLAGLEENYCRNPDNDEKGPWCYTTDPETRFDYCDIPECEDECMHCSGEHYEGKISKTMSGIECQSWGSQSPHAHGYLPSKFPNKNLKMNYCRNPDGEPRPWCFTTDPNKRWEFCDIPRCTTPPPTSGPTYQCLKGRGENYRGTVSVTASGHTCQRWSAQSPHKHNRTPENFPCKNLEENYCRNPDGETAPWCYTTDSEVRWDYCKIPSCGSSTTSTEYLDAPVPPEQTPVAQDCYRGNGESYRGTSSTTITGRKCQSWVSMTPHRHEKTPGNFPNAGLTMNYCRNPDADKSPWCYTTDPRVRWEYCNLKKCSETEQQVTNFPAIAQVPSVEDLSEDCMFGNGKRYRGKRATTVAGVPCQEWAAQEPHRHSIFTPETNPRAGLEKNYCRNPDGDDNGPWCYTTNPQKLFDYCDVPQCVTSSFDCGKPKVEPKKCPARVVGGCVSIPHSWPWQISLRHRYGGHFCGGTLISPEWVLTAKHCLEKSSSPSSYKVILGAHEEYHLGEGVQEIDVSKLFKEPSEADIALLKLSSPAIITDKVIPACLPTPNYVVADRTACYITGWGETKGTYGAGLLKEARLPVIENKVCNRYEYLGGKVSPNELCAGHLAGGIDSCQGDSGGPLVCFEKDKYILQGVTSWGLGCALPNKPGVYVRVSRFVTWIEEIMRRN.

The signal sequence occupies residues 1 to 19 (MDHKEVVLLLLLFLKSGLG). The 79-residue stretch at 20 to 98 (DSLDDYVNTQ…RDVVLFEKRI (79 aa)) folds into the PAN domain. Intrachain disulfides connect Cys49/Cys73, Cys53/Cys61, Cys103/Cys181, Cys124/Cys164, Cys152/Cys176, Cys185/Cys262, Cys188/Cys316, Cys206/Cys245, Cys234/Cys257, Cys275/Cys352, Cys296/Cys335, Cys324/Cys347, Cys377/Cys454, Cys398/Cys437, Cys426/Cys449, Cys480/Cys559, Cys501/Cys542, Cys530/Cys554, Cys566/Cys684, Cys576/Cys584, Cys606/Cys622, Cys698/Cys765, Cys728/Cys744, and Cys755/Cys783. Kringle domains are found at residues 103–181 (CKTG…IPEC) and 185–262 (CMHC…IPRC). A glycan (O-linked (GalNAc...) threonine) is linked at Thr268. 3 Kringle domains span residues 275–352 (CLKG…IPSC), 377–454 (CYRG…LKKC), and 480–559 (CMFG…VPQC). N-linked (GlcNAc...) asparagine glycosylation is present at Asn308. The 228-residue stretch at 580–807 (VVGGCVSIPH…FVTWIEEIMR (228 aa)) folds into the Peptidase S1 domain. Ser596 bears the Phosphoserine mark. Residues His621 and Asp664 each act as charge relay system in the active site. The active-site Charge relay system is the Ser759.

Belongs to the peptidase S1 family. Plasminogen subfamily. Interacts with CSPG4 and AMOT. Interacts (via the Kringle domains) with HRG; the interaction tethers PLG to the cell surface and enhances its activation. Interacts (via Kringle 4 domain) with ADA; the interaction stimulates PLG activation when in complex with DPP4. Angiostatin: Interacts with ATP5F1A; the interaction inhibits most of the angiogenic effects of angiostatin. In terms of processing, N-linked glycan contains N-acetyllactosamine, sialic acid and is core fucosylated. O-linked glycans consist of Gal-GalNAc disaccharide which is modified with up to 2 sialic acid residues (microheterogeneity). Post-translationally, in the presence of the inhibitor, the activation involves only cleavage after Arg-579, yielding two chains held together by two disulfide bonds. In the absence of the inhibitor, the activation involves additionally the removal of the activation peptide.

It localises to the secreted. The catalysed reaction is Preferential cleavage: Lys-|-Xaa &gt; Arg-|-Xaa, higher selectivity than trypsin. Converts fibrin into soluble products.. With respect to regulation, converted into plasmin by plasminogen activators, both plasminogen and its activator being bound to fibrin. Cannot be activated with streptokinase. Functionally, plasmin dissolves the fibrin of blood clots and acts as a proteolytic factor in a variety of other processes including embryonic development, tissue remodeling, tumor invasion, and inflammation. In ovulation, weakens the walls of the Graafian follicle. It activates the urokinase-type plasminogen activator, collagenases and several complement zymogens, such as C1, C4 and C5. Cleavage of fibronectin and laminin leads to cell detachment and apoptosis. Also cleaves fibrin, thrombospondin and von Willebrand factor. Its role in tissue remodeling and tumor invasion may be modulated by CSPG4. Binds to cells. This chain is Plasminogen (PLG), found in Sus scrofa (Pig).